A 1247-amino-acid polypeptide reads, in one-letter code: Probable phosphorylase b kinase regulatory subunit alpha (1247 aa).

The segment at 853–883 (LKGLYEKACQQKLWGLVRHTAGMLGKRVEDL) is calmodulin-binding. Residues S1030 and S1033 each carry the phosphoserine modification. The segment at 1052–1089 (DRQGQWLRRRRLDGALNRVPRDFYSRVWTVLEKCQGLA) is calmodulin-binding. C1244 is lipidated: S-farnesyl cysteine.

It belongs to the phosphorylase b kinase regulatory chain family. Although the final Cys may be farnesylated, the terminal tripeptide is probably not removed, and the C-terminus is not methylated.

It is found in the cell membrane. It functions in the pathway glycan biosynthesis; glycogen metabolism. Functionally, phosphorylase b kinase catalyzes the phosphorylation of serine in certain substrates, including troponin I. The alpha chain may bind calmodulin. The polypeptide is Probable phosphorylase b kinase regulatory subunit alpha (Drosophila melanogaster (Fruit fly)).